A 347-amino-acid chain; its full sequence is Putative coenzyme F420-dependent oxidoreductase Rv3520c (347 aa).

The chain is Putative coenzyme F420-dependent oxidoreductase Rv3520c from Mycobacterium tuberculosis (strain ATCC 25618 / H37Rv).